Consider the following 642-residue polypeptide: Tigger transposable element derived 5 (642 aa).

Residues 1-54 are disordered; that stretch reads MYPASPPAGPALHPVPHRARLPQPRCLAEPPRSPAPGPGSTARPPPPPAPGPRP. Pro residues predominate over residues 31-53; it reads PRSPAPGPGSTARPPPPPAPGPR. In terms of domain architecture, HTH psq-type spans 57–108; sequence AVKMTFRKAYSIKDKLQAIERVKGGERQASVCRDFGVPGGTLRGWLKDEPKL. DNA-binding regions (H-T-H motif) lie at residues 84–104 and 155–188; these read QASVCRDFGVPGGTLRGWLKD and PVIQAQAEAFARQIYGPECTFKASHGWFWRWQKR. Positions 122–195 constitute an HTH CENPB-type domain; the sequence is QRKKMRLANE…QKRHGISSQR (74 aa). A disordered region spans residues 202-238; that stretch reads SPVAGPAPVKEEPAQSPGAVLVPDGAPATLPHSEGGY. The 126-residue stretch at 240–365 folds into the DDE-1 domain; sequence DEQIYNANVT…CLQQKAVLLV (126 aa). Disordered regions lie at residues 375–400 and 548–581; these read TSMPPLEESEETPRQCQPELLGSPEE and GCREEVAPAAPPSPASLPSSIGAGEEEEEATEQG.

Belongs to the tigger transposable element derived protein family.

The protein resides in the nucleus. In Mus musculus (Mouse), this protein is Tigger transposable element derived 5 (Tigd5).